Here is a 322-residue protein sequence, read N- to C-terminus: Aspartate carbamoyltransferase catalytic subunit (322 aa).

Residues arginine 65 and threonine 66 each coordinate carbamoyl phosphate. L-aspartate is bound at residue lysine 93. 3 residues coordinate carbamoyl phosphate: arginine 115, histidine 143, and glutamine 146. The L-aspartate site is built by arginine 176 and arginine 230. Carbamoyl phosphate is bound by residues glycine 271 and proline 272.

The protein belongs to the aspartate/ornithine carbamoyltransferase superfamily. ATCase family. Heterododecamer (2C3:3R2) of six catalytic PyrB chains organized as two trimers (C3), and six regulatory PyrI chains organized as three dimers (R2).

It carries out the reaction carbamoyl phosphate + L-aspartate = N-carbamoyl-L-aspartate + phosphate + H(+). It participates in pyrimidine metabolism; UMP biosynthesis via de novo pathway; (S)-dihydroorotate from bicarbonate: step 2/3. Its function is as follows. Catalyzes the condensation of carbamoyl phosphate and aspartate to form carbamoyl aspartate and inorganic phosphate, the committed step in the de novo pyrimidine nucleotide biosynthesis pathway. The protein is Aspartate carbamoyltransferase catalytic subunit of Brucella canis (strain ATCC 23365 / NCTC 10854 / RM-666).